Reading from the N-terminus, the 150-residue chain is Monooxygenase dmxR10 (150 aa).

It belongs to the avfA family.

The protein operates within secondary metabolite biosynthesis. Its function is as follows. Monooxygenase; part of the gene cluster that mediates the biosynthesis of the dimeric xanthones cryptosporioptides. The pathway begins with the synthesis of atrochrysone thioester by the polyketide synthase dmx-nrPKS. The atrochrysone carboxyl ACP thioesterase dmxR1 then breaks the thioester bond and releases the atrochrysone carboxylic acid from dmx-nrPKS. Atrochrysone carboxylic acid is decarboxylated by the decarboxylase dmxR15, and oxidized by the anthrone oxygenase dmxR16 to yield emodin. Emodin is then reduced to emodin hydroquinone by the oxidoreductase dmxR7. A-ring reduction by the short chain dehydrogenase dmxR18, dehydration by the scytalone dehydratase-like protein dmxR17 and probable spontaneous re-oxidation, results in overall deoxygenation to chrysophanol. Baeyer-Villiger oxidation by the Baeyer-Villiger monooxygenase (BVMO) dmxR6 then yields monodictylactone in equilibrium with monodictyphenone. In the case of the cryptosporioptides biosynthesis, monodictylactone is reduced at C-12 to an alcohol (by the short chain dehydrogenases dmxR12 or dmxR8) and hydroxylated at C-5 by dmxR9, yielding the electron-rich aromatic which could eliminate H(2)O to form the ortho-quinonemethide, followed by tautomerisation to paraquinone and complete the formal reduction to produce the 10-methylgroup. Conjugate addition of C-4a-OH to the resulting paraquinone by the monooxygenase dmxR10 then gives cyclohexadienone, which is then reduced at C-5 by the short chain dehydrogenase dmxR3 to give the dihydroxanthone. The 6,7-epoxide in the cryptosporioptides could be introduced by the cytochrome P450 monooxygenase dmxL3. The highly reducing PKS dmxL2 manufactures butyrate, which is further carboxylated by dmxL1 to form ethylmalonate. It is not yet clear whether the carboxylation occurs while the butyrate is attached to the ACP of dmxL2, but this unusual fungal metabolite could then be esterified to O-5 by the O-acetyltransferase dmxR13. Finally, dimerization performed by dmxR5 gives the observed dimers cryptosporioptides A, B and C as the final products of the pathway. In Cryptosporiopsis sp. (strain 8999), this protein is Monooxygenase dmxR10.